The chain runs to 469 residues: MTRPVRTRFAPSPTGFIHLGNIRSALYPWAFARKMKGTFVLRIEDTDVERSSKEAVDAILEGMEWLGLDFDEGPIYQMQRMDRYREVLAQMLEKGLAYPCYMSAEELDALRERQRAAGLKPRYDGTWRPEPGKVLPEPPPGVKPVLRFRNPLTGTVAWDDAVKGRVEISNEELDDLVIARPDGTPIYNFCVVVDDMDMGITHVIRGDDHVNNTPRQINILRALGGEPPVYAHLPTVLNEQGEKMSKRHGAMSVMAYRDAGYLPEAVVNYLARLGWSHGDAEIFSREQFVEWFDLEHLGKSPAQYDHNKLNWLNAHYIKEADNARLAALAKPFLAALAIDDAALAAGPALEAVIALMKDRATTVKEIAEGAAMFYRVPAPDADALAQHVSDAVRPALADLAAALKAADWTKEAISAALKATLAAHKLKMPQLAMPVRLLVAGTTHTPSIDAVLALFDRDVVVSRIEAALA.

Positions 11 to 21 (PSPTGFIHLGN) match the 'HIGH' region motif. Residues 121–131 (PRYDGTWRPEP) are compositionally biased toward basic and acidic residues. A disordered region spans residues 121–141 (PRYDGTWRPEPGKVLPEPPPG). The 'KMSKS' region signature appears at 243-247 (KMSKR). Lys246 serves as a coordination point for ATP.

Belongs to the class-I aminoacyl-tRNA synthetase family. Glutamate--tRNA ligase type 1 subfamily. As to quaternary structure, monomer.

It localises to the cytoplasm. The enzyme catalyses tRNA(Glu) + L-glutamate + ATP = L-glutamyl-tRNA(Glu) + AMP + diphosphate. Its function is as follows. Catalyzes the attachment of glutamate to tRNA(Glu) in a two-step reaction: glutamate is first activated by ATP to form Glu-AMP and then transferred to the acceptor end of tRNA(Glu). This chain is Glutamate--tRNA ligase, found in Burkholderia multivorans (strain ATCC 17616 / 249).